We begin with the raw amino-acid sequence, 248 residues long: 2,3-bisphosphoglycerate-dependent phosphoglycerate mutase (248 aa).

Residues 8–15, 21–22, arginine 60, 87–90, lysine 98, 114–115, and 183–184 each bind substrate; these read RHGESQWN, TG, ERHY, RR, and GN. The Tele-phosphohistidine intermediate role is filled by histidine 9. Catalysis depends on glutamate 87, which acts as the Proton donor/acceptor.

It belongs to the phosphoglycerate mutase family. BPG-dependent PGAM subfamily. Homodimer.

The enzyme catalyses (2R)-2-phosphoglycerate = (2R)-3-phosphoglycerate. It functions in the pathway carbohydrate degradation; glycolysis; pyruvate from D-glyceraldehyde 3-phosphate: step 3/5. Its function is as follows. Catalyzes the interconversion of 2-phosphoglycerate and 3-phosphoglycerate. This Alteromonas mediterranea (strain DSM 17117 / CIP 110805 / LMG 28347 / Deep ecotype) protein is 2,3-bisphosphoglycerate-dependent phosphoglycerate mutase.